The following is a 65-amino-acid chain: Large ribosomal subunit protein bL35 (65 aa).

The protein belongs to the bacterial ribosomal protein bL35 family.

This chain is Large ribosomal subunit protein bL35, found in Pectobacterium atrosepticum (strain SCRI 1043 / ATCC BAA-672) (Erwinia carotovora subsp. atroseptica).